The primary structure comprises 384 residues: 1-deoxy-D-xylulose 5-phosphate reductoisomerase (384 aa).

Residues Thr-10, Gly-11, Ser-12, Ile-13, Lys-37, and Asn-124 each coordinate NADPH. Lys-125 provides a ligand contact to 1-deoxy-D-xylulose 5-phosphate. Position 126 (Glu-126) interacts with NADPH. Asp-150 is a Mn(2+) binding site. Residues Ser-151, Glu-152, Ser-176, and His-199 each contribute to the 1-deoxy-D-xylulose 5-phosphate site. Residue Glu-152 participates in Mn(2+) binding. An NADPH-binding site is contributed by Gly-205. Residues Ser-212, Asn-217, Lys-218, and Glu-221 each contribute to the 1-deoxy-D-xylulose 5-phosphate site. Position 221 (Glu-221) interacts with Mn(2+).

Belongs to the DXR family. Mg(2+) serves as cofactor. Requires Mn(2+) as cofactor.

It carries out the reaction 2-C-methyl-D-erythritol 4-phosphate + NADP(+) = 1-deoxy-D-xylulose 5-phosphate + NADPH + H(+). Its pathway is isoprenoid biosynthesis; isopentenyl diphosphate biosynthesis via DXP pathway; isopentenyl diphosphate from 1-deoxy-D-xylulose 5-phosphate: step 1/6. Its function is as follows. Catalyzes the NADPH-dependent rearrangement and reduction of 1-deoxy-D-xylulose-5-phosphate (DXP) to 2-C-methyl-D-erythritol 4-phosphate (MEP). The chain is 1-deoxy-D-xylulose 5-phosphate reductoisomerase from Clostridium tetani (strain Massachusetts / E88).